We begin with the raw amino-acid sequence, 389 residues long: Succinate--CoA ligase [ADP-forming] subunit beta (389 aa).

Positions 9 to 244 (KQLLAEYGIP…KTQEDETEVT (236 aa)) constitute an ATP-grasp domain. ATP contacts are provided by residues Lys46, 53-55 (GRG), Gly102, and Glu107. Asn199 and Asp213 together coordinate Mg(2+). Substrate-binding positions include Asn264 and 321-323 (GIV).

This sequence belongs to the succinate/malate CoA ligase beta subunit family. In terms of assembly, heterotetramer of two alpha and two beta subunits. The cofactor is Mg(2+).

It carries out the reaction succinate + ATP + CoA = succinyl-CoA + ADP + phosphate. It catalyses the reaction GTP + succinate + CoA = succinyl-CoA + GDP + phosphate. The protein operates within carbohydrate metabolism; tricarboxylic acid cycle; succinate from succinyl-CoA (ligase route): step 1/1. In terms of biological role, succinyl-CoA synthetase functions in the citric acid cycle (TCA), coupling the hydrolysis of succinyl-CoA to the synthesis of either ATP or GTP and thus represents the only step of substrate-level phosphorylation in the TCA. The beta subunit provides nucleotide specificity of the enzyme and binds the substrate succinate, while the binding sites for coenzyme A and phosphate are found in the alpha subunit. The polypeptide is Succinate--CoA ligase [ADP-forming] subunit beta (Xanthomonas campestris pv. campestris (strain 8004)).